Consider the following 367-residue polypeptide: Polygalacturonase (367 aa).

The first 19 residues, 1 to 19 (MSIRLIAVLSAASIAVTSA), serve as a signal peptide directing secretion. A disulfide bond links cysteine 27 and cysteine 42. N-linked (GlcNAc...) asparagine glycosylation occurs at asparagine 185. A PbH1 1 repeat occupies 187–208 (TDQLTIEDTVVKNQDDCIAVNQ). Aspartate 201 (proton donor) is an active-site residue. A disulfide bridge links cysteine 203 with cysteine 219. Residue histidine 223 is part of the active site. The stretch at 240-261 (VRNVTFSNSVVRKSRNGIHIKT) is one PbH1 2 repeat. Residue asparagine 242 is glycosylated (N-linked (GlcNAc...) asparagine). A disulfide bridge links cysteine 334 with cysteine 339. N-linked (GlcNAc...) asparagine glycans are attached at residues asparagine 343 and asparagine 357. Residues cysteine 358 and cysteine 367 are joined by a disulfide bond.

It belongs to the glycosyl hydrolase 28 family. As to expression, expressed in larval carcasses and gut, and adult gut.

The protein resides in the secreted. It is found in the cell wall. The catalysed reaction is (1,4-alpha-D-galacturonosyl)n+m + H2O = (1,4-alpha-D-galacturonosyl)n + (1,4-alpha-D-galacturonosyl)m.. The protein is Polygalacturonase of Phaedon cochleariae (Mustard beetle).